Consider the following 392-residue polypeptide: Probable tRNA sulfurtransferase (392 aa).

Positions 60–162 constitute a THUMP domain; it reads QQVINDLQQV…HDCAIVYGHK (103 aa). ATP contacts are provided by residues 180–181, 205–206, Arg264, Gly286, and Gln295; these read LL and TF.

This sequence belongs to the ThiI family.

It localises to the cytoplasm. The catalysed reaction is [ThiI sulfur-carrier protein]-S-sulfanyl-L-cysteine + a uridine in tRNA + 2 reduced [2Fe-2S]-[ferredoxin] + ATP + H(+) = [ThiI sulfur-carrier protein]-L-cysteine + a 4-thiouridine in tRNA + 2 oxidized [2Fe-2S]-[ferredoxin] + AMP + diphosphate. It carries out the reaction [ThiS sulfur-carrier protein]-C-terminal Gly-Gly-AMP + S-sulfanyl-L-cysteinyl-[cysteine desulfurase] + AH2 = [ThiS sulfur-carrier protein]-C-terminal-Gly-aminoethanethioate + L-cysteinyl-[cysteine desulfurase] + A + AMP + 2 H(+). It functions in the pathway cofactor biosynthesis; thiamine diphosphate biosynthesis. Functionally, catalyzes the ATP-dependent transfer of a sulfur to tRNA to produce 4-thiouridine in position 8 of tRNAs, which functions as a near-UV photosensor. Also catalyzes the transfer of sulfur to the sulfur carrier protein ThiS, forming ThiS-thiocarboxylate. This is a step in the synthesis of thiazole, in the thiamine biosynthesis pathway. The sulfur is donated as persulfide by IscS. This chain is Probable tRNA sulfurtransferase, found in Ureaplasma urealyticum serovar 10 (strain ATCC 33699 / Western).